A 444-amino-acid chain; its full sequence is Phosphoglucosamine mutase (444 aa).

Serine 101 serves as the catalytic Phosphoserine intermediate. Mg(2+)-binding residues include serine 101, aspartate 240, aspartate 242, and aspartate 244. Serine 101 carries the post-translational modification Phosphoserine.

This sequence belongs to the phosphohexose mutase family. Mg(2+) is required as a cofactor. Activated by phosphorylation.

The catalysed reaction is alpha-D-glucosamine 1-phosphate = D-glucosamine 6-phosphate. Catalyzes the conversion of glucosamine-6-phosphate to glucosamine-1-phosphate. The protein is Phosphoglucosamine mutase of Aeromonas salmonicida (strain A449).